A 158-amino-acid polypeptide reads, in one-letter code: MSNCFTHINADGNAHMVDVTEKAVTEREARAEAFIDMAPDTLAMIMNGSHHKGDVFATARIAGIQAAKKTSDLIPLCHPLMLTKVEVELEAQPEHNRVRITSLCKLSGKTGVEMEALTAASVAALTIYDMCKAVQKDMIISQVRLLEKRGGKSGHFKA.

Residues 76-78 and 114-115 contribute to the substrate site; these read LCH and ME. Asp129 is an active-site residue.

The protein belongs to the MoaC family. As to quaternary structure, homohexamer; trimer of dimers.

The enzyme catalyses (8S)-3',8-cyclo-7,8-dihydroguanosine 5'-triphosphate = cyclic pyranopterin phosphate + diphosphate. Its pathway is cofactor biosynthesis; molybdopterin biosynthesis. In terms of biological role, catalyzes the conversion of (8S)-3',8-cyclo-7,8-dihydroguanosine 5'-triphosphate to cyclic pyranopterin monophosphate (cPMP). This Shewanella frigidimarina (strain NCIMB 400) protein is Cyclic pyranopterin monophosphate synthase.